Consider the following 202-residue polypeptide: Recombination protein RecR (202 aa).

The segment at C57 to C72 adopts a C4-type zinc-finger fold. One can recognise a Toprim domain in the interval G81–P176.

The protein belongs to the RecR family.

Its function is as follows. May play a role in DNA repair. It seems to be involved in an RecBC-independent recombinational process of DNA repair. It may act with RecF and RecO. The protein is Recombination protein RecR of Hamiltonella defensa subsp. Acyrthosiphon pisum (strain 5AT).